Reading from the N-terminus, the 85-residue chain is Small ribosomal subunit protein uS17 (85 aa).

This sequence belongs to the universal ribosomal protein uS17 family. As to quaternary structure, part of the 30S ribosomal subunit.

Its function is as follows. One of the primary rRNA binding proteins, it binds specifically to the 5'-end of 16S ribosomal RNA. This is Small ribosomal subunit protein uS17 from Actinobacillus succinogenes (strain ATCC 55618 / DSM 22257 / CCUG 43843 / 130Z).